The following is a 138-amino-acid chain: Basic phospholipase A2 Cvv-N6 (138 aa).

The first 16 residues, 1-16 (MRTFWIVALLLVGVEG), serve as a signal peptide directing secretion. 7 disulfides stabilise this stretch: C42/C131, C44/C60, C59/C111, C65/C138, C66/C104, C73/C97, and C91/C102. Ca(2+) is bound by residues Y43, G45, and G47. H63 is an active-site residue. Residue D64 participates in Ca(2+) binding. The active site involves D105.

Belongs to the phospholipase A2 family. Group II subfamily. D49 sub-subfamily. In terms of assembly, monomer. Binds to calmodulin. Requires Ca(2+) as cofactor. In terms of tissue distribution, expressed by the venom gland.

It is found in the secreted. The catalysed reaction is a 1,2-diacyl-sn-glycero-3-phosphocholine + H2O = a 1-acyl-sn-glycero-3-phosphocholine + a fatty acid + H(+). Its activity is regulated as follows. Heparin and wedelolactone inhibit the myotoxic activity. The PLA2 inhibitor, para-bromophenacyl bromide (BPB), inhibits enzymatic and myotoxic activities. Its function is as follows. Snake venom phospholipase A2 (PLA2) that is myotoxic and displays moderate edema-inducing activity in rat paws. Does not show neurotoxic activity. PLA2 catalyzes the calcium-dependent hydrolysis of the 2-acyl groups in 3-sn-phosphoglycerides. This is Basic phospholipase A2 Cvv-N6 from Crotalus viridis viridis (Prairie rattlesnake).